A 205-amino-acid chain; its full sequence is MAMQKLFTYIYEFIEYRKMVLLEEKVPYDKFVQMIFNTGFFRINAETLNHGIVSVFIFGANGKYVHHGGDMRTLLTNALNEKKQYEELILIVDKPILGKKNILDIIVEQRAANPTVVINIYPYHLFCINIPKVSAIPRHKLITQEEAQAFLGREYLQPQDLMQISASDPPVVWLGGRPGDFVQIERPSETAMHAVVIRYITKSKI.

Belongs to the archaeal RpoH/eukaryotic RPB5 RNA polymerase subunit family. As to quaternary structure, part of the viral DNA-directed RNA polymerase that consists of 8 polII-like subunits (RPB1, RPB2, RPB3, RPB5, RPB6, RPB7, RPB9, RPB10), a capping enzyme and a termination factor.

The protein resides in the host cytoplasm. Its subcellular location is the virion. Its function is as follows. Component of the DNA-directed RNA polymerase (RNAP) that catalyzes the transcription in the cytoplasm of viral DNA into RNA using the four ribonucleoside triphosphates as substrates. This is DNA-directed RNA polymerase RPB5 homolog from African swine fever virus (isolate Pig/Kenya/KEN-50/1950) (ASFV).